We begin with the raw amino-acid sequence, 411 residues long: Dual-specificity RNA methyltransferase RlmN (411 aa).

Glutamate 124 functions as the Proton acceptor in the catalytic mechanism. The 250-residue stretch at 130–379 (EEGRGTLCIS…IRTPRGRDIL (250 aa)) folds into the Radical SAM core domain. An intrachain disulfide couples cysteine 137 to cysteine 382. Residues cysteine 144, cysteine 148, and cysteine 151 each coordinate [4Fe-4S] cluster. Residues 208–209 (GE), serine 240, 262–264 (SLH), and asparagine 339 each bind S-adenosyl-L-methionine. Cysteine 382 (S-methylcysteine intermediate) is an active-site residue.

It belongs to the radical SAM superfamily. RlmN family. Requires [4Fe-4S] cluster as cofactor.

The protein resides in the cytoplasm. It carries out the reaction adenosine(2503) in 23S rRNA + 2 reduced [2Fe-2S]-[ferredoxin] + 2 S-adenosyl-L-methionine = 2-methyladenosine(2503) in 23S rRNA + 5'-deoxyadenosine + L-methionine + 2 oxidized [2Fe-2S]-[ferredoxin] + S-adenosyl-L-homocysteine. The enzyme catalyses adenosine(37) in tRNA + 2 reduced [2Fe-2S]-[ferredoxin] + 2 S-adenosyl-L-methionine = 2-methyladenosine(37) in tRNA + 5'-deoxyadenosine + L-methionine + 2 oxidized [2Fe-2S]-[ferredoxin] + S-adenosyl-L-homocysteine. Functionally, specifically methylates position 2 of adenine 2503 in 23S rRNA and position 2 of adenine 37 in tRNAs. m2A2503 modification seems to play a crucial role in the proofreading step occurring at the peptidyl transferase center and thus would serve to optimize ribosomal fidelity. This chain is Dual-specificity RNA methyltransferase RlmN, found in Sinorhizobium fredii (strain NBRC 101917 / NGR234).